We begin with the raw amino-acid sequence, 217 residues long: MSAAKPKVAKKARVAPAHPPSSQMVVAAVTALKERGGSSTQAIKKYIAANYTVDMTKQGPFIRRALVKGVASGALVQTKGKGASGSFKLGKKKEGKSDAQKARIAAKKAKLAAKKKEQREKKALKTKARKEKVAAKKAAKKATKKTKKVKKPAAKKAKKPAAKKPAAKKPAAKKAKKPAKKVAKPAKKAAAKPAKKAAKPAKKAAKPAKKAAKPAKK.

Disordered stretches follow at residues 1-21 (MSAA…HPPS) and 80-217 (GKGA…PAKK). An H15 domain is found at 17-91 (AHPPSSQMVV…GASGSFKLGK (75 aa)). Over residues 104–113 (IAAKKAKLAA) the composition is skewed to basic residues. Residues 114–123 (KKKEQREKKA) show a composition bias toward basic and acidic residues. Residues 124 to 217 (LKTKARKEKV…AKKAAKPAKK (94 aa)) show a composition bias toward basic residues.

This sequence belongs to the histone H1/H5 family.

It is found in the nucleus. The protein resides in the chromosome. Histones H1 are necessary for the condensation of nucleosome chains into higher-order structures. The chain is Histone H1-gamma, late from Strongylocentrotus purpuratus (Purple sea urchin).